The following is a 271-amino-acid chain: Tryptophan synthase alpha chain (271 aa).

Active-site proton acceptor residues include Glu-49 and Asp-60.

The protein belongs to the TrpA family. As to quaternary structure, tetramer of two alpha and two beta chains.

The enzyme catalyses (1S,2R)-1-C-(indol-3-yl)glycerol 3-phosphate + L-serine = D-glyceraldehyde 3-phosphate + L-tryptophan + H2O. It participates in amino-acid biosynthesis; L-tryptophan biosynthesis; L-tryptophan from chorismate: step 5/5. Functionally, the alpha subunit is responsible for the aldol cleavage of indoleglycerol phosphate to indole and glyceraldehyde 3-phosphate. In Burkholderia ambifaria (strain MC40-6), this protein is Tryptophan synthase alpha chain.